The sequence spans 916 residues: DNA ligase 1 (916 aa).

The segment covering 1–10 (MQRSIMSFFQ) has biased composition (polar residues). Residues 1 to 197 (MQRSIMSFFQ…SPESVTLTKT (197 aa)) are disordered. Basic and acidic residues predominate over residues 13–43 (KEGKAKKPEKETPSSIREKEPPPKVALKERN). Phosphoserine occurs at positions 49, 51, and 65. Position 77 is a phosphothreonine (T77). The span at 99–111 (PENSPVFNCSSPM) shows a compositional bias: polar residues. Residues 119-129 (PKRRTARKQLP) are compositionally biased toward basic residues. An N6-acetyllysine modification is found at K144. Positions 153–177 (KEEETPKESLAEAEDIKQKEEKEGD) are enriched in basic and acidic residues. A compositionally biased stretch (polar residues) spans 185–197 (PTKSPESVTLTKT). T193 is modified (phosphothreonine). An N6-acetyllysine modification is found at K225. Phosphoserine is present on residues S228 and S229. Residue T232 is modified to Phosphothreonine. The disordered stretch occupies residues 236–266 (PAVKTEVKQEESGTLRKEETKGTLDPANYNP). Over residues 238–257 (VKTEVKQEESGTLRKEETKG) the composition is skewed to basic and acidic residues. The interval 447–456 (RLRLGLAEQS) is interaction with target DNA. E564 provides a ligand contact to ATP. K566 acts as the N6-AMP-lysine intermediate in catalysis. Positions 571 and 619 each coordinate ATP. Residue E619 coordinates Mg(2+). Residues 640-642 (KRK) form an interaction with target DNA region. E718 provides a ligand contact to Mg(2+). ATP is bound by residues K723 and K742. T796 carries the post-translational modification Phosphothreonine. Residues S799, S906, S907, and S911 each carry the phosphoserine modification. A disordered region spans residues 879–916 (DKQPEQATTSNQVASLYRKQSQIQNQQSSDLDSDVEDY). Positions 883–908 (EQATTSNQVASLYRKQSQIQNQQSSD) are enriched in polar residues.

It belongs to the ATP-dependent DNA ligase family. As to quaternary structure, interacts with PCNA. Interacts with POLB. Mg(2+) serves as cofactor.

Its subcellular location is the nucleus. It catalyses the reaction ATP + (deoxyribonucleotide)n-3'-hydroxyl + 5'-phospho-(deoxyribonucleotide)m = (deoxyribonucleotide)n+m + AMP + diphosphate.. Its function is as follows. DNA ligase that seals nicks in double-stranded during DNA repair. Also involved in DNA replication and DNA recombination. This Mus musculus (Mouse) protein is DNA ligase 1 (Lig1).